A 491-amino-acid chain; its full sequence is MKAIMAVGTTSHAGKSFLTAALCRLFNRKGWQVTPFKGQNMALNAYVTAGGGEMGHAQAVQAWAAGTIPRVEMNPILLKPQGNMTSQVIIKGKAVGVTTAVDYYQNYFEQGWQAIKESLAKLSAEFDLVVCEGAGSPAEINLKHRDLTNMRVAKYLDAATILVVDIDRGGAFAHVVGTLELLEPEERALIKGIVINKFRGQKSLLDSGITWLEDYTKIPVLGVLPYSDIFLSAEDSLSLLDRPAQKPKAELNIIVIRLPHIANFTDFDPLCGEATVNVRYLELQESLGDPDGVIIPGSKTTVADLIALNQSGMANQLQAYHQRGGIIFGICGGLQMLGRLILDTDHREGPESEAAGLNLLPLKTVITAEKITRQRQVLSNYPQGGLPVMGYEIHQGISQWESESGYQKMFEEDASLGIVNDSLSIWGCYLHGIFDNGSWRRTWLNHLRQRRGLLSLPTGIANYCEQREITLDNMANLLEEHLNLQPIFAHL.

The GATase cobBQ-type domain occupies 250 to 439; sequence ELNIIVIRLP…LHGIFDNGSW (190 aa). C331 acts as the Nucleophile in catalysis. H431 is a catalytic residue.

It belongs to the CobB/CobQ family. CobQ subfamily.

It functions in the pathway cofactor biosynthesis; adenosylcobalamin biosynthesis. In terms of biological role, catalyzes amidations at positions B, D, E, and G on adenosylcobyrinic A,C-diamide. NH(2) groups are provided by glutamine, and one molecule of ATP is hydrogenolyzed for each amidation. The protein is Cobyric acid synthase of Microcystis aeruginosa (strain NIES-843 / IAM M-2473).